We begin with the raw amino-acid sequence, 437 residues long: GTPase Der (437 aa).

2 consecutive EngA-type G domains span residues 3–167 and 176–352; these read NLVA…NKET and PRFA…ENRT. GTP contacts are provided by residues 9–16, 56–60, 119–122, 182–189, 229–233, and 294–297; these read GRPNVGKS, DTGGW, NKTD, GRPNAGKS, DTAGI, and NKWD. The KH-like domain occupies 353 to 437; sequence TKIPTARLNE…TPINIYIRQK (85 aa).

It belongs to the TRAFAC class TrmE-Era-EngA-EngB-Septin-like GTPase superfamily. EngA (Der) GTPase family. Associates with the 50S ribosomal subunit.

Its function is as follows. GTPase that plays an essential role in the late steps of ribosome biogenesis. This is GTPase Der from Bacteroides thetaiotaomicron (strain ATCC 29148 / DSM 2079 / JCM 5827 / CCUG 10774 / NCTC 10582 / VPI-5482 / E50).